The sequence spans 456 residues: Glycerol-3-phosphate acyltransferase 4 (456 aa).

Positions 1–37 (MFLLLPFDSLIVNLLGISLTVLFTLLLVFIIVPAIFG) are cleaved as a signal peptide. A run of 2 helical transmembrane segments spans residues 156 to 176 (ISLR…CFLL) and 180 to 200 (IALA…VGYL). Asparagine 247 carries N-linked (GlcNAc...) asparagine glycosylation. The short motif at 248-253 (HTSPID) is the HXXXXD motif element. N-linked (GlcNAc...) asparagine glycosylation is found at asparagine 327, asparagine 328, and asparagine 362.

It belongs to the 1-acyl-sn-glycerol-3-phosphate acyltransferase family. As to expression, highly expressed in testis.

It is found in the endoplasmic reticulum membrane. It catalyses the reaction sn-glycerol 3-phosphate + an acyl-CoA = a 1-acyl-sn-glycero-3-phosphate + CoA. The catalysed reaction is dodecanoyl-CoA + sn-glycerol 3-phosphate = 1-dodecanoyl-sn-glycerol 3-phosphate + CoA. The enzyme catalyses sn-glycerol 3-phosphate + hexadecanoyl-CoA = 1-hexadecanoyl-sn-glycero-3-phosphate + CoA. It carries out the reaction sn-glycerol 3-phosphate + octadecanoyl-CoA = 1-octadecanoyl-sn-glycero-3-phosphate + CoA. It catalyses the reaction sn-glycerol 3-phosphate + (9Z)-octadecenoyl-CoA = 1-(9Z-octadecenoyl)-sn-glycero-3-phosphate + CoA. The catalysed reaction is (9Z,12Z)-octadecadienoyl-CoA + sn-glycerol 3-phosphate = 1-(9Z,12Z)-octadecadienoyl-sn-glycero-3-phosphate + CoA. It participates in phospholipid metabolism; CDP-diacylglycerol biosynthesis; CDP-diacylglycerol from sn-glycerol 3-phosphate: step 1/3. Its function is as follows. Converts glycerol-3-phosphate to 1-acyl-sn-glycerol-3-phosphate (lysophosphatidic acid or LPA) by incorporating an acyl moiety at the sn-1 position of the glycerol backbone. Active against both saturated and unsaturated long-chain fatty acyl-CoAs. Protects cells against lipotoxicity. The protein is Glycerol-3-phosphate acyltransferase 4 of Mus musculus (Mouse).